The following is a 480-amino-acid chain: MALAIYNSLSRTKEIFEPLHSGVVSIYVCGPTVYGHAHLGHAKSYISFDVVVRWFRQSGYKVKYIQNITDVGHLTDDADEGEDKIMKQARLEKTDPMEIAQFYTRSFYEDMDRLGVERPNIAPTATAHIPEQIALVETLLRKGYAYEVNGNVYFSVNSFAGYGKLSGRTDQEALQSGSRVGIRSEKRDASDFALWKKAEEGHIMKWQSPWSVGYPGWHLECSAMAMKYLGETIDIHGGGMENKFPHHECEIAQSEAATGKPYVRYWMHNNMVTVNGTKMGKSLKNFVNLKELLQTRNPLALRFFILQSHYRSPLDYSEAALDAAAQGLEKLHETLRRFRHQAAGSGSLDVTPYAERFSEAMNDDFNTPIAIAVLFDLSKAINSALDSKGIVEADRAAIEAFLTIAATNTLGIASNNLADEQSNGNSMQRLDKVMQIMLELRHNARKQKDFATSDKIRDMLLAAGIEIKDTKEGAVWSVKG.

Cys29 contributes to the Zn(2+) binding site. Residues Pro31–His41 carry the 'HIGH' region motif. Residues Cys221, His246, and Glu250 each coordinate Zn(2+). Residues Lys278 to Ser282 carry the 'KMSKS' region motif. Lys281 serves as a coordination point for ATP.

It belongs to the class-I aminoacyl-tRNA synthetase family. Monomer. Zn(2+) serves as cofactor.

It localises to the cytoplasm. The catalysed reaction is tRNA(Cys) + L-cysteine + ATP = L-cysteinyl-tRNA(Cys) + AMP + diphosphate. The polypeptide is Cysteine--tRNA ligase (Chlorobium chlorochromatii (strain CaD3)).